Here is an 866-residue protein sequence, read N- to C-terminus: Leucine--tRNA ligase (866 aa).

The 'HIGH' region motif lies at 59–69 (PYPSGDLHMGH). The segment at 393-421 (VPVIKTDPQTGEPLLPESAPLESPAETGQ) is disordered. Residues 404–418 (EPLLPESAPLESPAE) are compositionally biased toward low complexity. The 'KMSKS' region signature appears at 628–632 (AMSKS). Residue Lys631 participates in ATP binding.

The protein belongs to the class-I aminoacyl-tRNA synthetase family.

Its subcellular location is the cytoplasm. The catalysed reaction is tRNA(Leu) + L-leucine + ATP = L-leucyl-tRNA(Leu) + AMP + diphosphate. This is Leucine--tRNA ligase from Leifsonia xyli subsp. xyli (strain CTCB07).